A 1935-amino-acid polypeptide reads, in one-letter code: MATRRATVPEQQQQQPSSPGSEISKNKDGQEQSEMVSPTEEEGFCWPGPKSVALRRASEGFGFTLRHFIVYPPESAVHTTVKDEENGNRGVNAGRPRNRLEPMDTIFVKQVKEGGPAHEAGLCTGDRIIKVNGESVIGKTYSQVIALIQNSDSTLELSVMPKDEDILQLAYSQDAYLKGNDSYSGNAQNIPEPPPICYPRTKPAASVMAQPVEVPPSGTSLTKQQSSRPVRTATTQPDRSYRVEIQVPPSPTDIVKSNTAVCVCNEAVRTVILPSEKVVDLSSNRTNRAGPLHRTEEVRYGLADPSMLKRTTSPPSSTPSVPMVPASRQFDNAGVIGKPPSYGGHSESMFSTRPSQAEESPSPTNHYASPGSHQQIDWRNYKTYKEYIDNRRMQMYGCRTIQERLDSLRAASQNTTDYDQMLPNRSSGQVRRRSTSHDRVPQSVQMRQRSVSQERLEDPVLMKEWPRSASQDTLTSLTVAPRNHRSESWDYLTRKEDFDQFIVDTQSNGEQKHNYKWTGFTEQDDQRGIYEIPRQHSFHMSLRSPNYTMAPLPYPSDSRRAGTRVLAPARPLQKVHPDLKTIQPTRNFQNSYRSPHPRPAVSERLVFPISKSNSVKIPATYASKPYSPSVGSEDGIVKDQKAVNYIHVSGPQNFQRKPQTESALGFQLDSLKTSTSASSSSPAHTKPAKQAKHSTATSQNVDGKKTQSPEANAGDSNSVLTSIDQVVLREKPSPGQQTSQPIRQPSYIFAVSDVEGASDTTCWLPNDARREVHIKRIEQKKASGSDSPGDSLASIPFIDEPTSPSIDHEIANIPASAVISISVQPLPTITTVPPSPTSPVPLIRRHFSHDHDSIRPSILEVNSKTERSKSCDEGLDDYKDEGKLSLKQGSSLKGIKARENVPSSEDSESRKDSSSDVFSDSNKEGFLYFRQLTTEKGKRVSGSMRPWKQMYVVLRGSALYLQKDKKEQSGHSSAQSDEEQLIGINGCLIDISYSETKRKNVFRLTTSDREFLFQAEDRDDMLAWIKAIQENGNLNDEQTDQASRVLISKRIKEYNTMMSSSSNKSEQSPKPSRQTLSIRQPFRATKPEGKLQSPHSPKQESERRLFSKDDISPPKDKGSWRRIMKKPFEKKPTTGGTFGVRLDDCPPAHNNKYVPLIVDVCCKLVEDRGLETTGIYRVPGNNAAISSMQEELNKGSTDIDIQDDKWRDLNVISSLLKSFFRKLPDPLFTNEKYNDFIEANRTEDPVERLKTLKRLILDLPDHHYETLKYLSAHLKAVAENSEKNKMEPRNLAIVFGPTLVRTSEDNMTHMVTHMPDQYKIVETLIQQHDWFFSEESADEPITAVQEESTVESQPVPNIDHLLPNIGRTGLSPGDVSDSASDSAKSKGSWGSGKDQYSRELLVSSLFAAASRKRKKQRDKPQPSSSEDELDNVFYQKELLQVEFQRPDKQNVDKDVDLKANALSLKDADNIKGTNIIKEDKLEKDIMHSEATSPCPPKLSEPPIVNHRLPPDDKNIPQISFQMEESMSDSGTMLSTSSQASAQRSKPKVVSPELKGSDFLTADVSSITSDYSTTSSTIYIVGLDQNLISPEVQSVAESKGEEADDERSELISEGRPMETDSENDFPIFASSIAFDRQHRSKVEEPTRNVQVNSEGSPSCTEGSITPRMDRRRFSSHKLIECDTLSRKKSIRQKTDSECSAESKNEETLSDAQEAVKKGRSLSIGDTTTNNEPEEPAWRIKITERLKLRLKASADDMFGIGSQKAQAAETRKKKNIRRRHTLGGQRDFAEISVLNAWKINEPSSKEAELSAVDRLKPKCPSQDLSISDWLARERLRTSTSELSMVEPEEKRISDATSQKEPASPSPPPASSPSQVSTAIVTAGSESPSQGTAPPPDDQMNGDSFQSKNKNNFSPAVDAHPHKLSGTQVVRSRFYQYL.

Positions 1–46 (MATRRATVPEQQQQQPSSPGSEISKNKDGQEQSEMVSPTEEEGFCW) are disordered. One can recognise a PDZ domain in the interval 78-163 (HTTVKDEENG…TLELSVMPKD (86 aa)). 5 disordered regions span residues 212-237 (VEVPPSGTSLTKQQSSRPVRTATTQP), 339-373 (PPSYGGHSESMFSTRPSQAEESPSPTNHYASPGSH), 413-456 (QNTT…QERL), 673-718 (TSTS…DSNS), and 862-919 (NSKT…DVFS). 3 stretches are compositionally biased toward polar residues: residues 217–237 (SGTSLTKQQSSRPVRTATTQP), 348–373 (SMFSTRPSQAEESPSPTNHYASPGSH), and 413–429 (QNTTDYDQMLPNRSSGQ). Composition is skewed to low complexity over residues 441 to 451 (PQSVQMRQRSV) and 673 to 685 (TSTSASSSSPAHT). Positions 708–718 (SPEANAGDSNS) are enriched in polar residues. Residues 863-884 (SKTERSKSCDEGLDDYKDEGKL) are compositionally biased toward basic and acidic residues. Residues 920–1033 (DSNKEGFLYF…WIKAIQENGN (114 aa)) form the PH domain. Residues 1056–1126 (TMMSSSSNKS…KGSWRRIMKK (71 aa)) form a disordered region. Residues 1059–1072 (SSSSNKSEQSPKPS) show a composition bias toward low complexity. Basic and acidic residues predominate over residues 1097 to 1119 (PKQESERRLFSKDDISPPKDKGS). The Rho-GAP domain maps to 1140-1332 (VRLDDCPPAH…TLIQQHDWFF (193 aa)). Disordered regions lie at residues 1341–1393 (ITAV…GSGK), 1411–1431 (RKRKKQRDKPQPSSSEDELDN), 1488–1510 (SEATSPCPPKLSEPPIVNHRLPP), 1525–1548 (SMSDSGTMLSTSSQASAQRSKPKV), 1637–1665 (HRSKVEEPTRNVQVNSEGSPSCTEGSITP), 1688–1733 (SIRQ…EPEE), and 1838–1925 (SELS…SGTQ). Residues 1345–1355 (QEESTVESQPV) show a composition bias toward polar residues. The span at 1376–1393 (SDSASDSAKSKGSWGSGK) shows a compositional bias: low complexity. Composition is skewed to polar residues over residues 1525–1543 (SMSDSGTMLSTSSQASAQR) and 1646–1662 (RNVQVNSEGSPSCTEGS). The segment covering 1691–1705 (QKTDSECSAESKNEE) has biased composition (basic and acidic residues). Polar residues-rich tracts occupy residues 1872 to 1889 (QVSTAIVTAGSESPSQGT) and 1898 to 1911 (NGDSFQSKNKNNFS).

Its subcellular location is the golgi apparatus membrane. It localises to the cell junction. It is found in the cytoplasmic vesicle membrane. The protein localises to the cytoplasm. The protein resides in the cytoskeleton. In terms of biological role, GTPase-activating protein (GAP) for rhoa and cdc42. This chain is Rho GTPase-activating protein 21 (arhgap21), found in Xenopus tropicalis (Western clawed frog).